The sequence spans 228 residues: MLHRKPYSETSLLVDLFTEESGRLTVLAKGARAKRSALKSVLQPFTPLLLRWTGKSSLKILTKAEPAAIALPLQQTALFSGFYVNELITRVIEPETPNPQLFQDYLHCLTSLAVSQNFVEPALREFEFKLLNILGYGVDFLHCAGSGEPVDENMTYRYREEKGFIASLIKDNLTFFGRELIAFERQDFSEKSVLQAAKRFTRVALKPYLGNKPLKSRELFTQTILHLK.

Belongs to the RecO family.

Involved in DNA repair and RecF pathway recombination. This chain is DNA repair protein RecO, found in Mannheimia succiniciproducens (strain KCTC 0769BP / MBEL55E).